Here is an 81-residue protein sequence, read N- to C-terminus: Photosystem I iron-sulfur center (81 aa).

2 4Fe-4S ferredoxin-type domains span residues 2-31 (SHSV…MVPW) and 39-68 (IASS…IRVY). [4Fe-4S] cluster-binding residues include C11, C14, C17, C21, C48, C51, C54, and C58.

In terms of assembly, the cyanobacterial PSI reaction center is composed of one copy each of PsaA,B,C,D,E,F,I,J,K,L,M and X, and forms trimeric complexes. The cofactor is [4Fe-4S] cluster.

It localises to the cellular thylakoid membrane. The enzyme catalyses reduced [plastocyanin] + hnu + oxidized [2Fe-2S]-[ferredoxin] = oxidized [plastocyanin] + reduced [2Fe-2S]-[ferredoxin]. Its function is as follows. Apoprotein for the two 4Fe-4S centers FA and FB of photosystem I (PSI); essential for photochemical activity. FB is the terminal electron acceptor of PSI, donating electrons to ferredoxin. The C-terminus interacts with PsaA/B/D and helps assemble the protein into the PSI complex. Required for binding of PsaD and PsaE to PSI. PSI is a plastocyanin/cytochrome c6-ferredoxin oxidoreductase, converting photonic excitation into a charge separation, which transfers an electron from the donor P700 chlorophyll pair to the spectroscopically characterized acceptors A0, A1, FX, FA and FB in turn. In terms of biological role, mutant proteins with a 3Fe-4S center are unable to reconstitute PSI activity in vivo. This is Photosystem I iron-sulfur center from Synechocystis sp. (strain ATCC 27184 / PCC 6803 / Kazusa).